The following is a 685-amino-acid chain: MAASSACLLGNGLSVYTTKQRFQKLGLDRTSKVTVVKASLDEKKHEGRRGFFKLLLGNAAAGVGLLASGNANADEQGQGVSSSRMSYSRFLEYLDKGRVEKVDLYENGTIAIVEAVSPELGNRIQRVRVQLPGLSQELLQKLRAKNIDFAAHNAQEDQGSPILNLIGNLAFPVILIGGLFLLSRRSSGGMGGPGGPGFPLQIGQSKAKFQMEPNTGVTFDDVAGVDEAKQDFMEVVEFLKKPERFTAVGARIPKGVLLVGPPGTGKTLLAKAIAGEAGVPFFSISGSEFVEMFVGVGASRVRDLFKKAKENAPCIVFVDEIDAVGRQRGTGIGGGNDEREQTLNQLLTEMDGFEGNTGVIVVAATNRADILDSALLRPGRFDRQVSVDVPDVKGRTDILKVHSGNKKFESGVSLEVIAMRTPGFSGADLANLLNEAAILAGRRGKTAISSKEIDDSIDRIVAGMEGTVMTDGKSKSLVAYHEVGHAICGTLTPGHDAVQKVTLIPRGQARGLTWFIPSDDPTLISKQQLFARIVGGLGGRAAEEVIFGESEVTTGAVSDLQQITGLAKQMVTTFGMSEIGPWSLMDSSEQSDVIMRMMARNSMSEKLANDIDTAVKTLSDKAYEIALSQIRNNREAMDKIVEILLEKETMSGDEFRAILSEFTEIPPENRVASSTSTSTPTPASV.

The transit peptide at 1-37 (MAASSACLLGNGLSVYTTKQRFQKLGLDRTSKVTVVK) directs the protein to the chloroplast. The N-terminal 36 residues, 38-73 (ASLDEKKHEGRRGFFKLLLGNAAAGVGLLASGNANA), are a transit peptide targeting the thylakoid. Residues 38–161 (ASLDEKKHEG…HNAQEDQGSP (124 aa)) are Lumenal, thylakoid-facing. Residues 162–182 (ILNLIGNLAFPVILIGGLFLL) traverse the membrane as a helical segment. Residues 183 to 685 (SRRSSGGMGG…STSTPTPASV (503 aa)) are Stromal-facing. Position 260 to 267 (260 to 267 (GPPGTGKT)) interacts with ATP. His481 provides a ligand contact to Zn(2+). Glu482 is an active-site residue. Zn(2+) contacts are provided by His485 and Asp559.

In the N-terminal section; belongs to the AAA ATPase family. This sequence in the C-terminal section; belongs to the peptidase M41 family. Heterohexamers with FTSH1, FTSH2 and FTSH5. May also form homooligomers. Zn(2+) serves as cofactor. In terms of tissue distribution, expressed in cotyledons, cauline and rosette leaves, stems, sepals, flovers and siliques. Very low in roots.

Its subcellular location is the plastid. It is found in the chloroplast thylakoid membrane. Its function is as follows. Part of a complex that function as an ATP-dependent zinc metallopeptidase. Involved in the thylakoid formation and in the removal of damaged D1 in the photosystem II, preventing cell death under high-intensity light conditions. This is ATP-dependent zinc metalloprotease FTSH 8, chloroplastic (FTSH8) from Arabidopsis thaliana (Mouse-ear cress).